The following is a 467-amino-acid chain: MEIEKQHVYISTVEVENLSDALFSGDEENGGSEERKTEINGNWIPATSITEAKINAKAKRRLRKNSSRDSGRGDSVSENGETQKAGLVVPTSPKGKVLDRRSRSGKGRGLPKKGGAGGKGVWGTPGQVYDVEEVDIKDPNYDDDQENCVYETVVLPLDERAFEKTLTPIIQEYFEHGDTNEVSEMLKDLNLGEMKYSVPVLAVSLALEGKASHREMTSKLISDLCGTVVSKTDVEKSFDKLLKDLPDLVLDSPRAPQLVGQFIARAVGDGILSSTYIDGYKGTVDSIQARAALDRATVLLSVTKGGKRIDNVWGSGGGQQSVKHLVKEIDMLLKEYLLSGDLLEAERCLQELEVPHFHHELVYEAIVMVLESTGEKTFKMMLDLLKSLSRSSVITMDQMKRGYERVYCEIPDINLDVPHSYSVLERFVEECFQAGIISKPLRDLCPSRGRKRFVSEGDGGRLKPESY.

Disordered stretches follow at residues 21–43 and 57–124; these read ALFSGDEENGGSEERKTEINGNW and KAKR…VWGT. Positions 57–63 match the Nuclear localization signal motif; sequence KAKRRLR. Residues 112-123 show a composition bias toward gly residues; the sequence is KKGGAGGKGVWG. 2 consecutive MI domains span residues 161 to 282 and 324 to 447; these read AFEK…GYKG and HLVK…LCPS. The Nuclear localization signal signature appears at 446–452; that stretch reads PSRGRKR.

Belongs to the PDCD4 family. In terms of assembly, interacts with EIF4A. Expressed in a broad spectrum of hematopoietic organs, such as thymus and bursa. Lower levels of expression detected in the kidney.

Its subcellular location is the nucleus. It localises to the cytoplasm. Inhibits translation initiation and cap-dependent translation. May excert its function by hindering the interaction between EIF4A and EIF4G. Inhibits the helicase activity of EIF4A. Binds RNA. Does not seem to be involved in apoptosis. This Gallus gallus (Chicken) protein is Programmed cell death protein 4 (PDCD4).